A 555-amino-acid polypeptide reads, in one-letter code: MIWVAVIITMLLFILVAKPTGVYLEKAFQGSKTLDKVFGPFEKLIFKITGVKEYNQTWKQYALSLVLLNGFMIVVVYFIFRLQGVLPLNPAHIEGMEPTLAFNTAISFMADTNLQHYSGENGLSYLSQLIGITFLMFAAPATTLALVMAFIRGLAGKELGNFFVDFTRALTRVFLPIAFIAALVFVALGVPQTLDGAVTAQTIDGAKQSILRGPVASFVSIKELGNNGGGFFGANSTHPFENPGQMSNILQMMLMMLLPTALPFTYGRMVGNKKQGRILFVSLFMVFLLGFITITTSELNGNPALNGMGIEHVQGSAEGKEVRFGTVFSSLYATVTTAAETGAVNTMHDTLTPIGGLVPLVNMMLNTVYGGVGAGFVNIIMYAIIAVFISGLMVGRTPEFLGKKIEGKEMKLIAVTILFHPLLILGFSALALSTNLGTDAISHSGFHGLTQVVYEYTSSAANNGSGFEGLGDNTPFWNITTGLVMFLGRYFSLITMLAVAASLKEKTVVPETVGTFRTDNSLFGGIFIGTIVIVGALTFFPMLVLGPIAEFLTLK.

The next 10 membrane-spanning stretches (helical) occupy residues 2–22 (IWVA…PTGV), 60–80 (QYAL…YFIF), 130–150 (IGIT…VMAF), 173–193 (VFLP…VPQT), 246–266 (MSNI…PFTY), 278–298 (ILFV…TTSE), 374–394 (AGFV…GLMV), 412–432 (LIAV…ALAL), 483–503 (LVMF…AASL), and 525–545 (GIFI…MLVL).

Belongs to the KdpA family. As to quaternary structure, the system is composed of three essential subunits: KdpA, KdpB and KdpC.

The protein localises to the cell membrane. In terms of biological role, part of the high-affinity ATP-driven potassium transport (or Kdp) system, which catalyzes the hydrolysis of ATP coupled with the electrogenic transport of potassium into the cytoplasm. This subunit binds the extracellular potassium ions and delivers the ions to the membrane domain of KdpB through an intramembrane tunnel. The sequence is that of Potassium-transporting ATPase potassium-binding subunit from Bacillus cereus (strain B4264).